The primary structure comprises 108 residues: Protein YcgL (108 aa).

One can recognise a YcgL domain in the interval 12 to 96 (MFCVIYRSSK…PPEDLLKQHL (85 aa)).

This chain is Protein YcgL, found in Escherichia coli O17:K52:H18 (strain UMN026 / ExPEC).